A 345-amino-acid polypeptide reads, in one-letter code: Dihydroorotate dehydrogenase (quinone) (345 aa).

Residues 65 to 69 (AGLDK) and threonine 89 each bind FMN. Lysine 69 contacts substrate. Residue 114 to 118 (NRLGF) coordinates substrate. The FMN site is built by asparagine 146 and asparagine 179. Position 179 (asparagine 179) interacts with substrate. The active-site Nucleophile is serine 182. Position 184 (asparagine 184) interacts with substrate. FMN contacts are provided by lysine 224 and threonine 252. A substrate-binding site is contributed by 253 to 254 (NT). FMN is bound by residues glycine 275, glycine 304, and 325-326 (YT).

The protein belongs to the dihydroorotate dehydrogenase family. Type 2 subfamily. As to quaternary structure, monomer. Requires FMN as cofactor.

The protein resides in the cell membrane. The catalysed reaction is (S)-dihydroorotate + a quinone = orotate + a quinol. It participates in pyrimidine metabolism; UMP biosynthesis via de novo pathway; orotate from (S)-dihydroorotate (quinone route): step 1/1. Catalyzes the conversion of dihydroorotate to orotate with quinone as electron acceptor. This chain is Dihydroorotate dehydrogenase (quinone), found in Leptothrix cholodnii (strain ATCC 51168 / LMG 8142 / SP-6) (Leptothrix discophora (strain SP-6)).